The sequence spans 430 residues: Multisubstrate adapter protein soc-1 (430 aa).

One can recognise a PH domain in the interval Asn-7–Lys-133. Over residues Ser-192–Ser-222 the composition is skewed to low complexity. Disordered regions lie at residues Ser-192–Thr-246, Glu-275–Phe-303, and Arg-315–Asp-377. Residues Arg-341–Glu-369 are compositionally biased toward polar residues.

In terms of assembly, interacts (via C-terminus) with sem-5 (probably via SH3 domain 2). Interacts with nicotinic acetylcholine receptor. In terms of processing, may be phosphorylated.

Its function is as follows. Adapter protein which modulates signaling mediated by several receptor tyrosine kinases. Plays a role in fluid homeostasis, probably downstream of receptor egl-15 and upstream of let-60/Ras. Involved in nicotinic acetylcholine receptor (nAChR)-mediated sensitivity to nicotine and levamisole and gamma-aminobutyric acid (GABA)receptor-mediated sensitivity to muscimol. Regulates synaptic levels of nAchR receptor subunit lev-1 and unc-38, and GABA receptor subunit unc-49 in the nerve cord, probably downstream of egl-15. Regulates motility. During the formation of neuromuscular junctions at the larval stage, down-regulates membrane protrusion from body wall muscles, probably downstream of egl-15. Promotes vulva induction and down-regulates fertility, probably downstream of receptor let-23. Down-regulates daf-2-mediated repression of dauer formation and positively regulates daf-2-mediated aging. May be involved in the recruitment of phosphatase ptp-2 to egl-15. The protein is Multisubstrate adapter protein soc-1 of Caenorhabditis elegans.